A 1542-amino-acid polypeptide reads, in one-letter code: ABC multidrug transporter AFR1 (1542 aa).

2 disordered regions span residues 1–84 (MSAA…LPAD) and 118–141 (SQQS…FSRK). Positions 18 to 41 (TATTQNPSGLANSQVTSDPVPSAT) are enriched in polar residues. Basic and acidic residues predominate over residues 60–69 (DKSVDAEKVE). Asn-207 and Asn-397 each carry an N-linked (GlcNAc...) asparagine glycan. In terms of domain architecture, ABC transporter 1 spans 221–473 (LKVLGIFGVN…MIGLGYRDLP (253 aa)). The next 5 membrane-spanning stretches (helical) occupy residues 584–604 (FGIS…GSVY), 618–638 (GGLL…ELPS), 669–689 (VPYN…MGGL), 694–714 (GAFF…SAFF), and 726–746 (VAAR…GYMI). Asn-822 carries an N-linked (GlcNAc...) asparagine glycan. Residues 844-864 (FGILVGFFAFFMFLQMMFIEY) form a helical membrane-spanning segment. Residues 917 to 1159 (FTWEGLNYTV…VLIDYLERNG (243 aa)) form the ABC transporter 2 domain. Asn-923 carries an N-linked (GlcNAc...) asparagine glycan. Residue 953–960 (GASGAGKT) coordinates ATP. The next 6 helical transmembrane spans lie at 1253–1273 (WTRL…FLQL), 1284–1304 (VFAI…IEPQ), 1335–1355 (MPYS…GVGF), 1365–1385 (FFLM…AVAA), 1390–1410 (ILIA…FCGV), and 1516–1536 (FGIF…AARF).

It belongs to the ABC transporter superfamily. ABCG family. PDR (TC 3.A.1.205) subfamily.

Its subcellular location is the cell membrane. It carries out the reaction itraconazole(in) + ATP + H2O = itraconazole(out) + ADP + phosphate + H(+). The catalysed reaction is voriconazole(in) + ATP + H2O = voriconazole(out) + ADP + phosphate + H(+). It catalyses the reaction fluconazole(in) + ATP + H2O = fluconazole(out) + ADP + phosphate + H(+). Functionally, major pleiotropic ABC efflux transporter that confers resistance to structurally and functionally unrelated compounds including azoles such as fluconazole (FLC), itraconazole (ITC), posaconazole (POS), and voriconazole (VRC). Is also able to efflux the eukaryote protein synthesis inhibitor cycloheximide (CHX). The polypeptide is ABC multidrug transporter AFR1 (Cryptococcus deuterogattii (strain R265) (Cryptococcus gattii VGII (strain R265))).